Here is a 1647-residue protein sequence, read N- to C-terminus: Maestro heat-like repeat-containing protein family member 1 (1647 aa).

HEAT repeat units follow at residues 9-47 (SPVLDNIVTSLLQSLSDSDESVRSTVVNSLYEIGFRQPN), 65-103 (QTHRVKILNSILQILEQTRNQLTDALSLNLIAMSISEMT), 224-262 (SEFYPALELMFSKWLGTNHEKVRLVTIEAVGSICSILSV), 351-389 (RGYSDVLISFLNQRLENRDLRSRAGSLSIIRHIVTRLDV), 597-635 (DVTLPKLISYLEDHTDIETWNKNQWEELVLRLLSETIKN), 968-1006 (FDSIGTTLSVLIPRCTDPEINVRRYAVESIQLILYIGFM), 1131-1168 (SLANHHLIPVLSVLLEYPMPHSVHVIKSFQIIAKDKNL), 1364-1400 (KELIQRLINTLLNSLVDPLVKLISLKGLSNIVSAGVE), 1403-1441 (NRYAPTVIDALSTSIDDQDETMAMECMLGLSKIFEVADE), 1490-1528 (YEQIHSSLPSLIMHLNDDVQSVKNSCKKTLFQLSTLMRS), and 1612-1647 (NINSTILTKSLVGLLAEKSPAVRKKAAESLGLLHHY).

The protein belongs to the MROH1 family. As to quaternary structure, homooligomer.

It localises to the lysosome membrane. In terms of biological role, lysosome fission factor. In Dictyostelium discoideum (Social amoeba), this protein is Maestro heat-like repeat-containing protein family member 1 (mroh1).